An 81-amino-acid polypeptide reads, in one-letter code: MQTAYWVMVMMMVWITAPLSEGGKPNDVIRGLVPDDLTPQLILRSLISRRRSDKDVREGYKCVWKTCMPALWRRHDLKGKD.

A signal peptide spans 1-22; sequence MQTAYWVMVMMMVWITAPLSEG. The propeptide occupies 23–57; sequence GKPNDVIRGLVPDDLTPQLILRSLISRRRSDKDVR. Glu-58 carries the post-translational modification 4-carboxyglutamate. Cysteines 62 and 67 form a disulfide. Position 64 is a D-tryptophan (Trp-64). The residue at position 69 (Pro-69) is a 4-hydroxyproline. Positions 71–81 are excised as a propeptide; the sequence is LWRRHDLKGKD.

The protein belongs to the conotoxin C superfamily. Consomatin family. In terms of tissue distribution, expressed by the venom duct.

Its subcellular location is the secreted. Functionally, moderately activates human somatostatin receptors (SSTR) with a preferential activation of SSTR1 and SSTR4. In vivo, does not cause behavioral changes in mice within a few minutes of intracranial injection, but causes a progressive loss of movement thereafter. Four to five hours after injection, mice recover, even with the highest dose tested. Shows antinociception and antihyperalgesia activities in two mouse models of acute pain, most probably by acting outside the central nervous system. The sequence is that of Consomatin Le1 from Conus lenavati (Cone snail).